The sequence spans 408 residues: MQIPSKLKPYYENIAFEQEDSKMIINLGPQHPSAHGNLRLILELDGEQVVKARPCIGYMHRGMEKMAENMIYQEFIPTTDRMDYIAASANNYAYCAAVEKLCGLEIPRRAAVIRMILLELNRITSHLLWLATHALDIGAMSVFLYCFREREYVLDLIEKYCGARLTHSSMRIGGVMLDLPENYLEEMLAFCDKFPNDLKDYEDLLDDNRIWRLRTENVGVVTKEQALNWGCTGVMLRGSGIKYDIRKEEPYLLYNEVEFGVPYATQGDSYARYKVYMQEFRESLKILRQCAMLYKDTSPEILATHPEYVSASKEQILTQNYSLMQHFVLITQGLKPPKGEVYVPTESPKGELGFFIHSDGTGRPYRLKARTPSYWHCAFFEEMLVGTYLADVVAIMGNVNIVLGEIDR.

Belongs to the complex I 49 kDa subunit family. As to quaternary structure, NDH-1 is composed of 14 different subunits. Subunits NuoB, C, D, E, F, and G constitute the peripheral sector of the complex.

The protein resides in the cell inner membrane. It carries out the reaction a quinone + NADH + 5 H(+)(in) = a quinol + NAD(+) + 4 H(+)(out). Its function is as follows. NDH-1 shuttles electrons from NADH, via FMN and iron-sulfur (Fe-S) centers, to quinones in the respiratory chain. The immediate electron acceptor for the enzyme in this species is believed to be ubiquinone. Couples the redox reaction to proton translocation (for every two electrons transferred, four hydrogen ions are translocated across the cytoplasmic membrane), and thus conserves the redox energy in a proton gradient. The polypeptide is NADH-quinone oxidoreductase subunit D (Campylobacter jejuni subsp. jejuni serotype O:2 (strain ATCC 700819 / NCTC 11168)).